The sequence spans 753 residues: Polyribonucleotide nucleotidyltransferase (753 aa).

2 residues coordinate Mg(2+): aspartate 543 and aspartate 549. The region spanning 609-668 (PRITTVKIPVAKIGELIGPKGKNINALTEETGANISIEDDGTVFISAADGASAEAAIEKI) is the KH domain. An S1 motif domain is found at 680-749 (GERFLGTVVK…NRGKISLVPV (70 aa)).

This sequence belongs to the polyribonucleotide nucleotidyltransferase family. It depends on Mg(2+) as a cofactor.

It is found in the cytoplasm. It carries out the reaction RNA(n+1) + phosphate = RNA(n) + a ribonucleoside 5'-diphosphate. Functionally, involved in mRNA degradation. Catalyzes the phosphorolysis of single-stranded polyribonucleotides processively in the 3'- to 5'-direction. The polypeptide is Polyribonucleotide nucleotidyltransferase (Corynebacterium glutamicum (strain ATCC 13032 / DSM 20300 / JCM 1318 / BCRC 11384 / CCUG 27702 / LMG 3730 / NBRC 12168 / NCIMB 10025 / NRRL B-2784 / 534)).